We begin with the raw amino-acid sequence, 301 residues long: Probable alpha-L-glutamate ligase 1 (301 aa).

The ATP-grasp domain occupies 104–287 (MQLMSRRGIG…VAGAIIEFVE (184 aa)). ATP contacts are provided by residues Lys141, 178–179 (EY), Asp187, and 211–213 (RSN). Residues Asp248, Glu260, and Asn262 each contribute to the Mg(2+) site. Mn(2+) contacts are provided by Asp248, Glu260, and Asn262.

It belongs to the RimK family. It depends on Mg(2+) as a cofactor. Mn(2+) is required as a cofactor.

This chain is Probable alpha-L-glutamate ligase 1, found in Shewanella putrefaciens (strain CN-32 / ATCC BAA-453).